A 624-amino-acid polypeptide reads, in one-letter code: Bifunctional protein ArgH (624 aa).

Positions 1–466 (MALWGGRFTQ…AARDTTLVKV (466 aa)) are argininosuccinate lyase. Positions 464-614 (VKVRPARITD…DEVALEFNLS (151 aa)) constitute an N-acetyltransferase domain. The tract at residues 467 to 624 (RPARITDIET…EQIISQVKVA (158 aa)) is probable acetyltransferase.

It in the N-terminal section; belongs to the lyase 1 family. Argininosuccinate lyase subfamily.

It localises to the cytoplasm. It catalyses the reaction 2-(N(omega)-L-arginino)succinate = fumarate + L-arginine. It participates in amino-acid biosynthesis; L-arginine biosynthesis; L-arginine from L-ornithine and carbamoyl phosphate: step 3/3. The protein is Bifunctional protein ArgH (argH) of Vibrio vulnificus (strain CMCP6).